The primary structure comprises 614 residues: UDP-sugar pyrophosphorylase (614 aa).

An N-acetylalanine modification is found at alanine 2.

It belongs to the USP family. Mg(2+) is required as a cofactor. Mn(2+) serves as cofactor. Ubiquitous, but most abundant in rosette leaves, inflorescences, stems, stamens and pollen.

It carries out the reaction a monosaccharide 1-phosphate + UTP + H(+) = a UDP-monosaccharide + diphosphate. Functionally, required for the synthesis of the intine, the pectocellulosic inner wall of developing pollen. May function as the terminal enzyme of the myo-inositol oxidation (MIO) pathway. May also play a role in the salvage pathway for synthesis of nucleotide sugars. Can use a wide range of substrates including glucose-1-phosphate, galactose-1-phosphate, xylose-1-phosphate, arabinose-1-phosphate and glucuronate-1-phosphate. The sequence is that of UDP-sugar pyrophosphorylase (USP) from Arabidopsis thaliana (Mouse-ear cress).